The following is a 245-amino-acid chain: Collagen triple helix repeat-containing protein 1 (245 aa).

An N-terminal signal peptide occupies residues Met1–Ala32. The region spanning Gln59–Lys92 is the Collagen-like domain. The tract at residues Val64 to Gly87 is disordered. The N-linked (GlcNAc...) asparagine glycan is linked to Asn188.

Post-translationally, N-glycosylated. In terms of tissue distribution, expressed after injury in the carotid arteries (at protein level). Expressed in brain, lung, and after injury in fibroblasts of the adventitia and the neointima of the arteries.

It localises to the secreted. Its subcellular location is the extracellular space. The protein resides in the extracellular matrix. In terms of biological role, its overexpression in smooth muscle cell lines increases their migratory ability and inhibits collagen type I expression. May act as a negative regulator of collagen matrix deposition. The sequence is that of Collagen triple helix repeat-containing protein 1 (Cthrc1) from Rattus norvegicus (Rat).